The primary structure comprises 192 residues: Transmembrane protein 11, mitochondrial (192 aa).

The disordered stretch occupies residues 1–20 (MAAWGRRRLGPGSSGGSARE). Helical transmembrane passes span 84-100 (TAVL…LALP) and 107-124 (ISLP…LYGI).

This sequence belongs to the TMEM11 family. In terms of assembly, associates with the mitochondrial contact site and cristae organizing system (MICOS) complex, composed of at least MICOS10/MIC10, CHCHD3/MIC19, CHCHD6/MIC25, APOOL/MIC27, IMMT/MIC60, APOO/MIC23/MIC26 and QIL1/MIC13. This complex was also known under the names MINOS or MitOS complex. The MICOS complex associates with mitochondrial outer membrane proteins SAMM50, MTX1, MTX2 and DNAJC11, mitochondrial inner membrane protein TMEM11 and with HSPA9. Interacts with IMMT/MIC60.

The protein localises to the mitochondrion inner membrane. Its function is as follows. Plays a role in mitochondrial morphogenesis. This is Transmembrane protein 11, mitochondrial (TMEM11) from Homo sapiens (Human).